The following is a 461-amino-acid chain: Chromosomal replication initiator protein DnaA (461 aa).

The segment at 1-90 (MAVSLWQQCI…RPSARPVAPA (90 aa)) is domain I, interacts with DnaA modulators. The tract at residues 91 to 124 (PVAAKPVNRQTKAQVGTTSFNTQAEPIINPNHRS) is domain II. Residues 125-341 (NINPTYQFDN…GALNRVIANA (217 aa)) form a domain III, AAA+ region region. ATP contacts are provided by Gly-169, Gly-171, Lys-172, and Thr-173. The domain IV, binds dsDNA stretch occupies residues 342–461 (NFTGRPITID…YANLIRTLSS (120 aa)).

The protein belongs to the DnaA family. As to quaternary structure, oligomerizes as a right-handed, spiral filament on DNA at oriC.

It localises to the cytoplasm. Its function is as follows. Plays an essential role in the initiation and regulation of chromosomal replication. ATP-DnaA binds to the origin of replication (oriC) to initiate formation of the DNA replication initiation complex once per cell cycle. Binds the DnaA box (a 9 base pair repeat at the origin) and separates the double-stranded (ds)DNA. Forms a right-handed helical filament on oriC DNA; dsDNA binds to the exterior of the filament while single-stranded (ss)DNA is stabiized in the filament's interior. The ATP-DnaA-oriC complex binds and stabilizes one strand of the AT-rich DNA unwinding element (DUE), permitting loading of DNA polymerase. After initiation quickly degrades to an ADP-DnaA complex that is not apt for DNA replication. Binds acidic phospholipids. The chain is Chromosomal replication initiator protein DnaA from Shewanella frigidimarina (strain NCIMB 400).